The chain runs to 192 residues: Lipid A acyltransferase PagP (192 aa).

A signal peptide spans 1 to 29; sequence MVVNVVIVAKKYFLFITLLIIQVSLPAHA. Catalysis depends on residues H64, D107, and S108.

It belongs to the lipid A palmitoyltransferase family. In terms of assembly, homodimer.

It is found in the cell outer membrane. It catalyses the reaction a lipid A + a 1,2-diacyl-sn-glycero-3-phosphocholine = a hepta-acyl lipid A + a 2-acyl-sn-glycero-3-phosphocholine. The enzyme catalyses a lipid IVA + a 1,2-diacyl-sn-glycero-3-phosphocholine = a lipid IVB + a 2-acyl-sn-glycero-3-phosphocholine. It carries out the reaction a lipid IIA + a 1,2-diacyl-sn-glycero-3-phosphocholine = a lipid IIB + a 2-acyl-sn-glycero-3-phosphocholine. Its function is as follows. Transfers a fatty acid residue from the sn-1 position of a phospholipid to the N-linked hydroxyfatty acid chain on the proximal unit of lipid A or its precursors. The polypeptide is Lipid A acyltransferase PagP (Citrobacter rodentium (strain ICC168) (Citrobacter freundii biotype 4280)).